Here is a 462-residue protein sequence, read N- to C-terminus: Phosphoglycerate kinase, chloroplastic (462 aa).

A chloroplast-targeting transit peptide spans 1-61; it reads MALSMKMRAN…AGRSRIVVEA (61 aa). Positions 83, 84, 86, 101, 123, 124, 126, 127, 183, 215, and 216 each coordinate (2R)-3-phosphoglycerate. Gly261 contributes to the ADP binding site. CDP is bound at residue Gly261. Lys263 and Lys267 together coordinate AMP. Residue Lys267 participates in ATP binding. ADP is bound at residue Gly285. Gly285 is a binding site for CDP. 2 residues coordinate AMP: Gly286 and Gly358. ATP-binding residues include Gly286 and Gly358. CDP-binding residues include Gly383 and Phe388. An ADP-binding site is contributed by Phe388. Glu389 contacts AMP. ATP-binding residues include Glu389, Asp420, and Ser421. Position 420 (Asp420) interacts with Mg(2+).

The protein belongs to the phosphoglycerate kinase family. Monomer. Mg(2+) is required as a cofactor.

It localises to the plastid. It is found in the chloroplast. The enzyme catalyses (2R)-3-phosphoglycerate + ATP = (2R)-3-phospho-glyceroyl phosphate + ADP. It functions in the pathway carbohydrate biosynthesis; Calvin cycle. The protein is Phosphoglycerate kinase, chloroplastic (PGK) of Volvox carteri (Green alga).